The primary structure comprises 196 residues: ATP-dependent Clp protease proteolytic subunit (196 aa).

The active-site Nucleophile is serine 98. Residue histidine 123 is part of the active site.

Belongs to the peptidase S14 family. In terms of assembly, fourteen ClpP subunits assemble into 2 heptameric rings which stack back to back to give a disk-like structure with a central cavity, resembling the structure of eukaryotic proteasomes.

It localises to the cytoplasm. It carries out the reaction Hydrolysis of proteins to small peptides in the presence of ATP and magnesium. alpha-casein is the usual test substrate. In the absence of ATP, only oligopeptides shorter than five residues are hydrolyzed (such as succinyl-Leu-Tyr-|-NHMec, and Leu-Tyr-Leu-|-Tyr-Trp, in which cleavage of the -Tyr-|-Leu- and -Tyr-|-Trp bonds also occurs).. Functionally, cleaves peptides in various proteins in a process that requires ATP hydrolysis. Has a chymotrypsin-like activity. Plays a major role in the degradation of misfolded proteins. This is ATP-dependent Clp protease proteolytic subunit from Limosilactobacillus fermentum (strain NBRC 3956 / LMG 18251) (Lactobacillus fermentum).